Consider the following 133-residue polypeptide: Small ribosomal subunit protein uS11 (133 aa).

The segment at 1 to 22 (MPPKTRGAVRKPRKKDKKNIAL) is disordered. Residues 7-17 (GAVRKPRKKDK) are compositionally biased toward basic residues.

The protein belongs to the universal ribosomal protein uS11 family. Part of the 30S ribosomal subunit. Interacts with proteins S7 and S18. Binds to IF-3.

In terms of biological role, located on the platform of the 30S subunit, it bridges several disparate RNA helices of the 16S rRNA. Forms part of the Shine-Dalgarno cleft in the 70S ribosome. This is Small ribosomal subunit protein uS11 from Renibacterium salmoninarum (strain ATCC 33209 / DSM 20767 / JCM 11484 / NBRC 15589 / NCIMB 2235).